The chain runs to 463 residues: Casein kinase 1 (463 aa).

The 270-residue stretch at Phe-9 to Ile-278 folds into the Protein kinase domain. ATP is bound by residues Ile-15–Leu-23 and Lys-38. Asp-128 acts as the Proton acceptor in catalysis. Over residues Glu-296–Thr-306 the composition is skewed to polar residues. The disordered stretch occupies residues Glu-296 to Thr-448. Positions Glu-315–Asp-328 are enriched in basic and acidic residues. Polar residues-rich tracts occupy residues Thr-376–Ser-396 and Asn-404–Ala-440.

This sequence belongs to the protein kinase superfamily. CK1 Ser/Thr protein kinase family. Casein kinase I subfamily. In terms of assembly, monomer. Autophosphorylated. As to expression, expressed in leaves, stems, panicles and seeds. Expressed in root tissues and lamina joints.

Its subcellular location is the cytoplasm. It localises to the nucleus. The enzyme catalyses L-seryl-[protein] + ATP = O-phospho-L-seryl-[protein] + ADP + H(+). It catalyses the reaction L-threonyl-[protein] + ATP = O-phospho-L-threonyl-[protein] + ADP + H(+). Inhibited by N-(2-aminoethyl)-5-chloroisoquinoline-8-sulfonamide (CKI-7). Functionally, casein kinases are operationally defined by their preferential utilization of acidic proteins such as caseins as substrates. Can phosphorylate casein in vitro. Required for normal root development through modulation of cell elongation. Plants silencing CKI1 show abnormal root development, with reduced number of lateral and adventitious roots, and shortened primary roots as a result of reduced cell elongation. May be involved in abscisic acid (ABA) and brassinosteroid (BR) signaling pathways. Plays an important role in the adaptive growth and fitness under low temperature (LT) conditions. May confer tolerance to LT through an auxin-dependent process. The sequence is that of Casein kinase 1 (CKI1) from Oryza sativa subsp. japonica (Rice).